Reading from the N-terminus, the 78-residue chain is Small ribosomal subunit protein uS17 (78 aa).

The protein belongs to the universal ribosomal protein uS17 family. As to quaternary structure, part of the 30S ribosomal subunit.

Functionally, one of the primary rRNA binding proteins, it binds specifically to the 5'-end of 16S ribosomal RNA. The chain is Small ribosomal subunit protein uS17 from Sinorhizobium medicae (strain WSM419) (Ensifer medicae).